The sequence spans 379 residues: Cytochrome b (379 aa).

The next 4 membrane-spanning stretches (helical) occupy residues 34–54, 78–99, 114–134, and 179–199; these read FGSLLGICLITQILTGLLLAM, WLIRNLHANGASFFFICIYLHI, WNTGVILLLTLMATAFVGYVL, and FFALHFLLPFLIAGITLIHLT. Heme b-binding residues include H84 and H98. 2 residues coordinate heme b: H183 and H197. H202 lines the a ubiquinone pocket. The next 4 helical transmembrane spans lie at 227–247, 289–309, 321–341, and 348–368; these read LKDILGFTLMFIPLLILAFFS, LGGVLALAASVLILFLIPFLH, LSQVLFWFLVANLLILTWIGS, and FIIIGQMASFTYFLILLILFP.

This sequence belongs to the cytochrome b family. The cytochrome bc1 complex contains 11 subunits: 3 respiratory subunits (MT-CYB, CYC1 and UQCRFS1), 2 core proteins (UQCRC1 and UQCRC2) and 6 low-molecular weight proteins (UQCRH/QCR6, UQCRB/QCR7, UQCRQ/QCR8, UQCR10/QCR9, UQCR11/QCR10 and a cleavage product of UQCRFS1). This cytochrome bc1 complex then forms a dimer. Requires heme b as cofactor.

The protein localises to the mitochondrion inner membrane. In terms of biological role, component of the ubiquinol-cytochrome c reductase complex (complex III or cytochrome b-c1 complex) that is part of the mitochondrial respiratory chain. The b-c1 complex mediates electron transfer from ubiquinol to cytochrome c. Contributes to the generation of a proton gradient across the mitochondrial membrane that is then used for ATP synthesis. In Casuarius bennetti (Dwarf cassowary), this protein is Cytochrome b (MT-CYB).